The primary structure comprises 1292 residues: MVTPRLQTMAESSKFKKKVHFGETRSDRTKKLFRHYTVGSYDSFDASSDCIIEEKTVVLQKKDNEGFGFVLRGAKADTPIEEFNPTPAFPALQYLESVDEDGVAWQAGLRTGDFLTEVNNENVVKVGHRQVVNMIRHGGNHLVLKVVTVTRNLDPDDTARKKAPPPPKRAPTTALSLRSKSMTSELEELAVDIASVRRRKDVQVSDVECLKRRIVIRVALNKSEESGPISKPLRPLDNTPVNSRVATVKQRPTSRCFPAASDTNSMYDRQGIAVIPPTTPGSHQGPFLGIPRGTMRRQKSIDSRIPLSGITEEERQFLAPPMLKFTRSLSMPDASEDIPPPPATLPPSPPPPSPSSFNSPKSPAPRGYGTIKPAFTQNSGTKSPSPAVRSDNVGTIARDKSMYFRHEANRFSLDSEELYNSNMSTQQNFINKRSKMPENPYSEVGRLGNKGVYVPAKPVRRKGMLVKQSNVEDSPEKTCSIPIPTIIIKEPSTSSSGKSSQGSSMETDLQISEQVGQLRPDESLNVSGPFAAAIAGAVRDREKRLEARRNSPAFLSTDLGDECVGPKPSPRLQHSKSIDDGMFCSEEKAKHFMAPSSLIINRGSSNAFTNNDSSHQGDVSNARMSKIKGPENNAAPAKSTNASGNYMHPVTGKLLDPNSPLALALAARDRALKEQNQPSPSPTDPEKADLNKPLFIDTKLRSGMETINANRPNMRGMLKRQETESKHEPDSSKEEKRQGEKKNMLINIMDTSQQKTAGLLMVHTVDTTKADNVLTESEEAEKDPPPENSNSPVSEPREELENSIPKASECGTPAAPHIKAIVSVCSVEEPVILPFRIPPPPFASVDVDEDFVFTEPLPPPLEFANSFDIPEDASQIPPASLADLLIQRKNRAFPPPSFNPNIASNSIESKRLAALSNCLPTSFMQHPESFDNVTDSGIEEVDSRSGSDHHLETTSTISTVSSISTLSSEGGENLDTCTVYADGQAFLVDKPPVPPKPKVKPIINKSNALYKDAVLEENLDNFAVPLPAPPPLPLSIQPSMTKAGQQRTSKLWGDNTEVKSLVMPSPKANVISELNSILQQMNREKATKTGEGLDSPTGMKTASLSTRGTDALSTVSGNRNAAVTFTIRPGANQPISLQNRTPEFDSRVTGMRRAPSPVVVSPAEIIRDIKPGPLSAPPASMSDVFILPSQPPSGDMFGMSMGRSRSPSPSILQQPISNKPFSAKPIHMWTKQDVAEWLESLHLGEHREMFMDNEIDGTHLPNLQKEDLIDLGVTRVGHRMNIERALKQLLDR.

The region spanning 56–150 (TVVLQKKDNE…HLVLKVVTVT (95 aa)) is the PDZ domain. Disordered regions lie at residues 155-176 (PDDTARKKAPPPPKRAPTTALS), 331-393 (MPDA…SDNV), 488-508 (IKEPSTSSSGKSSQGSSMETD), 604-656 (SSNA…KLLD), 671-743 (ALKE…EKKN), 774-811 (LTESEEAEKDPPPENSNSPVSEPREELENSIPKASECG), and 938-968 (IEEVDSRSGSDHHLETTSTISTVSSISTLSS). A compositionally biased stretch (pro residues) spans 338–354 (IPPPPATLPPSPPPPSP). The segment covering 355–365 (SSFNSPKSPAP) has biased composition (low complexity). Polar residues predominate over residues 375-384 (FTQNSGTKSP). Low complexity predominate over residues 492–504 (STSSSGKSSQGSS). Positions 604–623 (SSNAFTNNDSSHQGDVSNAR) are enriched in polar residues. Residues 719-743 (KRQETESKHEPDSSKEEKRQGEKKN) are compositionally biased toward basic and acidic residues. Over residues 941–952 (VDSRSGSDHHLE) the composition is skewed to basic and acidic residues. Residues 953–968 (TTSTISTVSSISTLSS) show a composition bias toward low complexity. An SH3-binding motif is present at residues 991–997 (PPVPPKP). The segment at 1087–1115 (TKTGEGLDSPTGMKTASLSTRGTDALSTV) is disordered. Residues 1098–1115 (GMKTASLSTRGTDALSTV) show a composition bias toward polar residues. One can recognise an SAM domain in the interval 1229–1292 (WTKQDVAEWL…ERALKQLLDR (64 aa)).

Belongs to the SHANK family.

Its subcellular location is the cytoplasm. The protein localises to the synapse. It localises to the postsynaptic density. Seems to be an adapter protein in the postsynaptic density (PSD) of excitatory synapses that interconnects receptors of the postsynaptic membrane including NMDA-type and metabotropic glutamate receptors, and the actin-based cytoskeleton. May play a role in the structural and functional organization of the dendritic spine and synaptic junction. The sequence is that of SH3 and multiple ankyrin repeat domains protein 2 (shank2) from Xenopus laevis (African clawed frog).